Here is a 258-residue protein sequence, read N- to C-terminus: Envelope glycoprotein L (258 aa).

Positions 1–31 are cleaved as a signal peptide; sequence MYECMFFSHRLTIGFYIPLIVLTTMSSLSES. The 208-residue stretch at 36–243 folds into the gL betaherpesvirus-type domain; it reads QKTACTVAAI…ILYQASLSGP (208 aa). The cysteines at positions 145 and 150 are disulfide-linked.

This sequence belongs to the herpesviridae glycoprotein L (gL) family. Betaherpesvirinae gL subfamily. In terms of assembly, interacts with glycoprotein H (gH); this interaction is necessary for the correct processing and cell surface expression of gH. Forms the envelope pentamer complex (PC) composed of gH, gL, UL128, UL130, and UL131A. The pentamer interacts with host NRP2. Forms the envelope trimer complex composed of gH, gL, and gO. The trimer interacts with host PDGFRA.

It localises to the virion membrane. The protein localises to the host cell membrane. Its subcellular location is the host Golgi apparatus. It is found in the host trans-Golgi network. Functionally, the heterodimer glycoprotein H-glycoprotein L is required for the fusion of viral and plasma membranes leading to virus entry into the host cell. Acts as a functional inhibitor of gH and maintains gH in an inhibited form. Upon binding to host integrins, gL dissociates from gH leading to activation of the viral fusion glycoproteins gB and gH. In human cytomegalovirus, forms two distincts complexes to mediate viral entry, a trimer and a pentamer at the surface of the virion envelope. The gH-gL-gO trimer is required for infection in fibroblasts by interacting with host PDGFRA. The gH-gL-UL128-UL130-UL131A pentamer is essential for viral entry in epithelial, endothelial and myeloid cells via interaction with host NRP2. This Guinea pig cytomegalovirus (strain 22122) (GPCMV) protein is Envelope glycoprotein L.